The chain runs to 113 residues: UPF0342 protein SPy_0811/M5005_Spy0626 (113 aa).

It belongs to the UPF0342 family.

The polypeptide is UPF0342 protein SPy_0811/M5005_Spy0626 (Streptococcus pyogenes serotype M1).